Consider the following 131-residue polypeptide: Lysosomal enzyme trafficking factor (131 aa).

Helical transmembrane passes span 8-28 (MGWI…YYVF) and 66-86 (LPFW…FLFL).

Belongs to the LYSET family.

It is found in the golgi apparatus membrane. In terms of biological role, required for mannose-6-phosphate-dependent trafficking of lysosomal enzymes. LYSET bridges GlcNAc-1-phosphate transferase (GNPTAB), to the membrane-bound transcription factor site-1 protease (MBTPS1), thus allowing proteolytic activation of the GNPTAB. GNPTAB is involved in the regulation of M6P-dependent Golgi-to-lysosome trafficking of lysosomal enzymes. LYSET is thus an essential factor for maturation and delivery of lysosomal hydrolases. The polypeptide is Lysosomal enzyme trafficking factor (lyset-a) (Xenopus laevis (African clawed frog)).